We begin with the raw amino-acid sequence, 969 residues long: RNA polymerase-associated protein RapA (969 aa).

A Helicase ATP-binding domain is found at Glu164 to Asp334. Asp177–Thr184 serves as a coordination point for ATP. The DEAH box signature appears at Asp280–His283. One can recognise a Helicase C-terminal domain in the interval Arg492 to Arg686.

Belongs to the SNF2/RAD54 helicase family. RapA subfamily. As to quaternary structure, interacts with the RNAP. Has a higher affinity for the core RNAP than for the holoenzyme. Its ATPase activity is stimulated by binding to RNAP.

Functionally, transcription regulator that activates transcription by stimulating RNA polymerase (RNAP) recycling in case of stress conditions such as supercoiled DNA or high salt concentrations. Probably acts by releasing the RNAP, when it is trapped or immobilized on tightly supercoiled DNA. Does not activate transcription on linear DNA. Probably not involved in DNA repair. This is RNA polymerase-associated protein RapA from Vibrio parahaemolyticus serotype O3:K6 (strain RIMD 2210633).